A 129-amino-acid chain; its full sequence is Large ribosomal subunit protein bL12 (129 aa).

Belongs to the bacterial ribosomal protein bL12 family. As to quaternary structure, homodimer. Part of the ribosomal stalk of the 50S ribosomal subunit. Forms a multimeric L10(L12)X complex, where L10 forms an elongated spine to which 2 to 4 L12 dimers bind in a sequential fashion. Binds GTP-bound translation factors.

Its function is as follows. Forms part of the ribosomal stalk which helps the ribosome interact with GTP-bound translation factors. Is thus essential for accurate translation. This chain is Large ribosomal subunit protein bL12, found in Fervidobacterium nodosum (strain ATCC 35602 / DSM 5306 / Rt17-B1).